The sequence spans 121 residues: Small ribosomal subunit protein bS16 (121 aa).

Residues leucine 97–serine 114 show a composition bias toward basic and acidic residues. Residues leucine 97 to serine 121 form a disordered region.

It belongs to the bacterial ribosomal protein bS16 family.

This is Small ribosomal subunit protein bS16 from Prochlorococcus marinus (strain AS9601).